The chain runs to 103 residues: Large ribosomal subunit protein uL24 (103 aa).

This sequence belongs to the universal ribosomal protein uL24 family. As to quaternary structure, part of the 50S ribosomal subunit.

One of two assembly initiator proteins, it binds directly to the 5'-end of the 23S rRNA, where it nucleates assembly of the 50S subunit. Its function is as follows. One of the proteins that surrounds the polypeptide exit tunnel on the outside of the subunit. The protein is Large ribosomal subunit protein uL24 of Actinobacillus succinogenes (strain ATCC 55618 / DSM 22257 / CCUG 43843 / 130Z).